We begin with the raw amino-acid sequence, 251 residues long: 3-deoxy-manno-octulosonate cytidylyltransferase (251 aa).

The protein belongs to the KdsB family.

The protein localises to the cytoplasm. It carries out the reaction 3-deoxy-alpha-D-manno-oct-2-ulosonate + CTP = CMP-3-deoxy-beta-D-manno-octulosonate + diphosphate. It participates in nucleotide-sugar biosynthesis; CMP-3-deoxy-D-manno-octulosonate biosynthesis; CMP-3-deoxy-D-manno-octulosonate from 3-deoxy-D-manno-octulosonate and CTP: step 1/1. Its pathway is bacterial outer membrane biogenesis; lipopolysaccharide biosynthesis. In terms of biological role, activates KDO (a required 8-carbon sugar) for incorporation into bacterial lipopolysaccharide in Gram-negative bacteria. In Alcanivorax borkumensis (strain ATCC 700651 / DSM 11573 / NCIMB 13689 / SK2), this protein is 3-deoxy-manno-octulosonate cytidylyltransferase.